The chain runs to 326 residues: Biotin synthase (326 aa).

The Radical SAM core domain occupies 50-279 (FNGEKVDVEQ…ESVIKISGGR (230 aa)). [4Fe-4S] cluster contacts are provided by C68, C72, and C75. [2Fe-2S] cluster is bound by residues C112, C145, C204, and K274.

Belongs to the radical SAM superfamily. Biotin synthase family. As to quaternary structure, homodimer. It depends on [4Fe-4S] cluster as a cofactor. The cofactor is [2Fe-2S] cluster.

The enzyme catalyses (4R,5S)-dethiobiotin + (sulfur carrier)-SH + 2 reduced [2Fe-2S]-[ferredoxin] + 2 S-adenosyl-L-methionine = (sulfur carrier)-H + biotin + 2 5'-deoxyadenosine + 2 L-methionine + 2 oxidized [2Fe-2S]-[ferredoxin]. The protein operates within cofactor biosynthesis; biotin biosynthesis; biotin from 7,8-diaminononanoate: step 2/2. Its function is as follows. Catalyzes the conversion of dethiobiotin (DTB) to biotin by the insertion of a sulfur atom into dethiobiotin via a radical-based mechanism. This Nitrosopumilus maritimus (strain SCM1) protein is Biotin synthase.